Here is a 196-residue protein sequence, read N- to C-terminus: Imidazoleglycerol-phosphate dehydratase (196 aa).

This sequence belongs to the imidazoleglycerol-phosphate dehydratase family.

Its subcellular location is the cytoplasm. The enzyme catalyses D-erythro-1-(imidazol-4-yl)glycerol 3-phosphate = 3-(imidazol-4-yl)-2-oxopropyl phosphate + H2O. The protein operates within amino-acid biosynthesis; L-histidine biosynthesis; L-histidine from 5-phospho-alpha-D-ribose 1-diphosphate: step 6/9. This Chlorobium chlorochromatii (strain CaD3) protein is Imidazoleglycerol-phosphate dehydratase.